The sequence spans 76 residues: Omega-conotoxin-like Ai6.3 (76 aa).

The signal sequence occupies residues 1–22; the sequence is MKLTCLMIVAVLFLTAWTFVTA. Residues 23 to 50 constitute a propeptide that is removed on maturation; it reads VPDSSNALENLYLKAHHEMNNPEDSELN. Cystine bridges form between cysteine 53/cysteine 67, cysteine 60/cysteine 71, and cysteine 66/cysteine 75.

The protein belongs to the conotoxin O1 superfamily. In terms of tissue distribution, expressed by the venom duct.

The protein localises to the secreted. Functionally, omega-conotoxins act at presynaptic membranes, they bind and block voltage-gated calcium channels (Cav). This Conus ammiralis (Admiral cone) protein is Omega-conotoxin-like Ai6.3.